Consider the following 90-residue polypeptide: Probable Fe(2+)-trafficking protein (90 aa).

This sequence belongs to the Fe(2+)-trafficking protein family. In terms of assembly, monomer.

In terms of biological role, could be a mediator in iron transactions between iron acquisition and iron-requiring processes, such as synthesis and/or repair of Fe-S clusters in biosynthetic enzymes. In Serratia proteamaculans (strain 568), this protein is Probable Fe(2+)-trafficking protein.